The sequence spans 81 residues: Small cysteine-rich protein 4 (81 aa).

The signal sequence occupies residues 1 to 23 (MDTKVACLLLIILGALTVQGAVS). Residues 24-25 (GN) constitute a propeptide that is removed on maturation.

Belongs to the Cnidaria small cysteine-rich protein (SCRiP) family. beta subfamily. Contains 4 disulfide bonds.

It is found in the secreted. The protein localises to the nematocyst. In terms of biological role, induces neurotoxic symptoms on zebrafish. Has also been claimed to be implied in calcification, but tests on homolog proteins suggest that proteins of this family have a neurotoxic function and not a calcification function. In Orbicella faveolata (Mountainous star coral), this protein is Small cysteine-rich protein 4.